The sequence spans 180 residues: Large ribosomal subunit protein uL5 (180 aa).

This sequence belongs to the universal ribosomal protein uL5 family. Part of the 50S ribosomal subunit; part of the 5S rRNA/L5/L18/L25 subcomplex. Contacts the 5S rRNA and the P site tRNA. Forms a bridge to the 30S subunit in the 70S ribosome.

Its function is as follows. This is one of the proteins that bind and probably mediate the attachment of the 5S RNA into the large ribosomal subunit, where it forms part of the central protuberance. In the 70S ribosome it contacts protein S13 of the 30S subunit (bridge B1b), connecting the 2 subunits; this bridge is implicated in subunit movement. Contacts the P site tRNA; the 5S rRNA and some of its associated proteins might help stabilize positioning of ribosome-bound tRNAs. In Chlamydia trachomatis serovar L2 (strain ATCC VR-902B / DSM 19102 / 434/Bu), this protein is Large ribosomal subunit protein uL5.